Consider the following 155-residue polypeptide: Small ribosomal subunit protein bS6 (155 aa).

Residues 94-155 (EEHETEPSAM…RDDNSDGGQE (62 aa)) are disordered. The span at 107-149 (RGDRGDRGDRRGGDRFGDRDRGDRGDRGSSRFGDRERPRRDDN) shows a compositional bias: basic and acidic residues.

It belongs to the bacterial ribosomal protein bS6 family.

Binds together with bS18 to 16S ribosomal RNA. The protein is Small ribosomal subunit protein bS6 of Parvibaculum lavamentivorans (strain DS-1 / DSM 13023 / NCIMB 13966).